A 156-amino-acid polypeptide reads, in one-letter code: Ribosomal RNA large subunit methyltransferase H (156 aa).

S-adenosyl-L-methionine is bound by residues L73, G104, and 123–128 (ISSMTL).

Belongs to the RNA methyltransferase RlmH family. Homodimer.

It localises to the cytoplasm. It carries out the reaction pseudouridine(1915) in 23S rRNA + S-adenosyl-L-methionine = N(3)-methylpseudouridine(1915) in 23S rRNA + S-adenosyl-L-homocysteine + H(+). In terms of biological role, specifically methylates the pseudouridine at position 1915 (m3Psi1915) in 23S rRNA. The sequence is that of Ribosomal RNA large subunit methyltransferase H from Burkholderia cenocepacia (strain ATCC BAA-245 / DSM 16553 / LMG 16656 / NCTC 13227 / J2315 / CF5610) (Burkholderia cepacia (strain J2315)).